We begin with the raw amino-acid sequence, 485 residues long: Shutoff alkaline exonuclease (485 aa).

Belongs to the herpesviridae alkaline nuclease family. As to quaternary structure, forms a complex with the DNA polymerase, the DNA polymerase processivity factor, and the major DNA binding protein.

The protein resides in the host nucleus. It is found in the host cytoplasm. Plays a role in processing non linear or branched viral DNA intermediates in order to promote the production of mature packaged unit-length linear progeny viral DNA molecules. Exhibits endonuclease and exonuclease activities and accepts both double-stranded and single-stranded DNA as substrate. Exonuclease digestion of DNA is in the 5'-&gt; 3' direction and the products are 5'-monophosphate nucleosides. Additionally, forms a recombinase with the major DNA-binding protein, which displays strand exchange activity. Also acts as a cytoplasmic RNA endonuclease that induces degradation of the majority of the cellular messenger RNAs during early lytic infection. The resulting inhibition of cellular protein synthesis serves to ensure maximal viral gene expression and evasion from host immune response. Internally cleaves host mRNAs which are then degraded by the cellular exonuclease XRN1. Bypasses therefore the regulatory steps of deadenylation and decapping normally required for XRN1 activation. The protein is Shutoff alkaline exonuclease (37) of Alcelaphine herpesvirus 1 (strain C500) (AlHV-1).